A 152-amino-acid chain; its full sequence is Troponin C (152 aa).

T1 carries the N-acetylthreonine modification. 4 EF-hand domains span residues K9 to L44, V45 to E80, L82 to E117, and L118 to A152. Residues D131, D133, S135, T137, and E142 each coordinate Ca(2+).

Belongs to the troponin C family.

Its function is as follows. Troponin is the central regulatory protein of striated muscle contraction. Tn consists of three components: Tn-I which is the inhibitor of actomyosin ATPase, Tn-T which contains the binding site for tropomyosin and Tn-C. The binding of calcium to Tn-C abolishes the inhibitory action of Tn on actin filaments. The sequence is that of Troponin C from Mizuhopecten yessoensis (Japanese scallop).